A 315-amino-acid polypeptide reads, in one-letter code: Glutaminase (315 aa).

Residues Ser-70, Asn-120, Glu-166, Asn-173, Tyr-197, Tyr-249, and Val-267 each contribute to the substrate site.

It belongs to the glutaminase family. As to quaternary structure, homotetramer.

It catalyses the reaction L-glutamine + H2O = L-glutamate + NH4(+). The chain is Glutaminase from Sinorhizobium fredii (strain NBRC 101917 / NGR234).